A 200-amino-acid polypeptide reads, in one-letter code: Small ribosomal subunit protein uS4 (200 aa).

Residues 92–155 (SRLDAVVYSL…QNLDIIKESV (64 aa)) enclose the S4 RNA-binding domain.

This sequence belongs to the universal ribosomal protein uS4 family. Part of the 30S ribosomal subunit. Contacts protein S5. The interaction surface between S4 and S5 is involved in control of translational fidelity.

Functionally, one of the primary rRNA binding proteins, it binds directly to 16S rRNA where it nucleates assembly of the body of the 30S subunit. In terms of biological role, with S5 and S12 plays an important role in translational accuracy. The polypeptide is Small ribosomal subunit protein uS4 (Staphylococcus epidermidis (strain ATCC 35984 / DSM 28319 / BCRC 17069 / CCUG 31568 / BM 3577 / RP62A)).